We begin with the raw amino-acid sequence, 277 residues long: Purine nucleoside phosphorylase 2 (277 aa).

Phosphate contacts are provided by residues histidine 65, 85–87, and alanine 117; that span reads RGH. Glutamate 197 contributes to the a purine D-ribonucleoside binding site. Residue serine 216 participates in phosphate binding. Asparagine 239 is an a purine D-ribonucleoside binding site.

This sequence belongs to the PNP/MTAP phosphorylase family. Hexamer. Dimer of trimers.

The catalysed reaction is a purine D-ribonucleoside + phosphate = a purine nucleobase + alpha-D-ribose 1-phosphate. It participates in purine metabolism; xanthosine degradation. The protein operates within purine metabolism; purine nucleoside salvage. With respect to regulation, rapidly inactivated by p-chloromercuriphenylsulfonic acid (p-CMB). Dithiothreitol incubation restores the activity. Its function is as follows. The purine nucleoside phosphorylases catalyze the phosphorolytic breakdown of the N-glycosidic bond in the beta-(deoxy)ribonucleoside molecules, with the formation of the corresponding free purine bases and pentose-1-phosphate. This protein can degrade all purine nucleosides including xanthosine, inosine and guanosine, but cannot cleave adenosine, deoxyadenosine or hypoxanthine arabinoside. Has a preference for the neutral over the monoanionic form of xanthosine. The polypeptide is Purine nucleoside phosphorylase 2 (xapA) (Escherichia coli (strain K12)).